Here is a 156-residue protein sequence, read N- to C-terminus: Small ribosomal subunit protein uS7 (156 aa).

It belongs to the universal ribosomal protein uS7 family. As to quaternary structure, part of the 30S ribosomal subunit. Contacts proteins S9 and S11.

Its function is as follows. One of the primary rRNA binding proteins, it binds directly to 16S rRNA where it nucleates assembly of the head domain of the 30S subunit. Is located at the subunit interface close to the decoding center, probably blocks exit of the E-site tRNA. This is Small ribosomal subunit protein uS7 from Nitratidesulfovibrio vulgaris (strain ATCC 29579 / DSM 644 / CCUG 34227 / NCIMB 8303 / VKM B-1760 / Hildenborough) (Desulfovibrio vulgaris).